Reading from the N-terminus, the 220-residue chain is Protein ABA DEFICIENT 4, chloroplastic (220 aa).

The N-terminal 37 residues, 1–37, are a transit peptide targeting the chloroplast; that stretch reads MGFSSFISQPLSSSLSVMKRNVSAKRSELCLDSSKIR. 4 consecutive transmembrane segments (helical) span residues 77–97, 112–132, 154–174, and 195–215; these read IASS…TLMV, SVPY…SWTP, MFSS…VDLF, and SLCL…KAII.

In terms of tissue distribution, expressed in root vasculature, root hairs, leaves, trichomes, sepals, stamens, stigma, pedicels, siliques and embryo.

It localises to the plastid. The protein resides in the chloroplast membrane. Functionally, required for neoxanthin biosynthesis, an intermediary step in abscisic acid (ABA) biosynthesis. Probably not involved directly in the enzymatic conversion of violaxanthin to neoxanthin. Cannot convert violaxanthin to neoxanthin in vitro. Required for ABA biosynthesis in response to drought stress. Required for neoxanthin biosynthesis which is involved in photoprotection of photosystem II (PSII). Neoxanthin acts as an antioxidant within the photosystem PSII supercomplex. The sequence is that of Protein ABA DEFICIENT 4, chloroplastic from Arabidopsis thaliana (Mouse-ear cress).